The chain runs to 928 residues: Protein NETWORKED 2B (928 aa).

Residues 10–90 (YSWWWASHIR…ERYDHLSTEL (81 aa)) form the NAB domain. Residues 108 to 144 (PLVDDDDDDDDDNPKKPPKHLHLIPSGTNIPQVPEVP) form a disordered region. Residues 110–119 (VDDDDDDDDD) show a composition bias toward acidic residues. Coiled coils occupy residues 207-309 (SYEQ…AKKA) and 360-445 (ALLK…VKMD). Disordered stretches follow at residues 447–472 (DVEGDGLNPEDIQEEDTVEDSDSISN) and 489–529 (KQSR…EERR). Over residues 457–468 (DIQEEDTVEDSD) the composition is skewed to acidic residues. Over residues 489-506 (KQSRDQESMQEEKSETRD) the composition is skewed to basic and acidic residues. Residues 547-574 (LLDEYSSVLRDYREVKRKLSEVEKKNRD) are a coiled coil. The tract at residues 620–651 (AESVSISHSSNSSFSMPPLPQRGDLKRASEQE) is disordered. A compositionally biased stretch (low complexity) spans 622–634 (SVSISHSSNSSFS). Residues 642-651 (GDLKRASEQE) show a composition bias toward basic and acidic residues.

It belongs to the NET family.

Plant-specific actin binding protein. May be part of a membrane-cytoskeletal adapter complex. This is Protein NETWORKED 2B from Arabidopsis thaliana (Mouse-ear cress).